The following is a 579-amino-acid chain: Arginine--tRNA ligase (579 aa).

The short motif at 123–133 (PNLAKEMHVGH) is the 'HIGH' region element.

It belongs to the class-I aminoacyl-tRNA synthetase family. In terms of assembly, monomer.

It localises to the cytoplasm. The catalysed reaction is tRNA(Arg) + L-arginine + ATP = L-arginyl-tRNA(Arg) + AMP + diphosphate. This chain is Arginine--tRNA ligase, found in Saccharophagus degradans (strain 2-40 / ATCC 43961 / DSM 17024).